A 286-amino-acid polypeptide reads, in one-letter code: Penicillin-insensitive murein endopeptidase (286 aa).

The signal sequence occupies residues 1–22 (MNKILLKTTIIFTALFSLNVVA). Residues His-117, His-120, Asp-127, Asp-152, and His-218 each contribute to the Zn(2+) site.

This sequence belongs to the peptidase M74 family. The cofactor is Zn(2+).

The protein localises to the periplasm. Its function is as follows. Murein endopeptidase that cleaves the D-alanyl-meso-2,6-diamino-pimelyl amide bond that connects peptidoglycan strands. Likely plays a role in the removal of murein from the sacculus. In Haemophilus influenzae (strain ATCC 51907 / DSM 11121 / KW20 / Rd), this protein is Penicillin-insensitive murein endopeptidase (mepA).